The following is a 225-amino-acid chain: Thylakoid lumenal 17.9 kDa protein, chloroplastic (225 aa).

Its subcellular location is the plastid. It localises to the chloroplast thylakoid lumen. The polypeptide is Thylakoid lumenal 17.9 kDa protein, chloroplastic (Arabidopsis thaliana (Mouse-ear cress)).